Here is a 416-residue protein sequence, read N- to C-terminus: Xyloglucan O-acetyltransferase 1 (416 aa).

Residues 1-14 lie on the Cytoplasmic side of the membrane; sequence MGLNEQQNVPSQRK. A helical; Signal-anchor for type II membrane protein membrane pass occupies residues 15–35; that stretch reads IIVFIVLAFIPIALFRLCFNN. Residues 36–416 are Lumenal-facing; sequence PFSSIKDTSL…MIEMLRRWKV (381 aa). 4 disulfide bridges follow: Cys79/Cys129, Cys100/Cys165, Cys109/Cys395, and Cys318/Cys391. Asn96 is a glycosylation site (N-linked (GlcNAc...) asparagine). The GDS motif motif lies at 152 to 154; that stretch reads GDS. The active-site Nucleophile is Ser154. N-linked (GlcNAc...) asparagine glycosylation is found at Asn194, Asn269, and Asn319. The Proton donor role is filled by Asp390. Positions 390–393 match the DXXH motif motif; that stretch reads DCLH. The active-site Proton acceptor is the His393.

It belongs to the PC-esterase family. TBL subfamily.

It is found in the golgi apparatus membrane. Xyloglucan acetyltransferase that catalyzes the acetylation of fucosylated Gal residues on xyloglucan side chains. Predominantly catalyze 6-O-monoacetylation of Gal residues in the Fuc-Gal-Xyl trisaccharide side chains of xyloglucan oligomers. Involved in xyloglucan specific O-acetylation in roots and rosette leaves. The protein is Xyloglucan O-acetyltransferase 1 of Arabidopsis thaliana (Mouse-ear cress).